Here is a 63-residue protein sequence, read N- to C-terminus: Large ribosomal subunit protein uL29 (63 aa).

The protein belongs to the universal ribosomal protein uL29 family.

This is Large ribosomal subunit protein uL29 from Pseudomonas fluorescens (strain ATCC BAA-477 / NRRL B-23932 / Pf-5).